The sequence spans 241 residues: MAKIHMVLQGKGGVGKSAIAAIIAQYKMDKGQTPLCIDTDPVNATFEGYKALNVRRLNIMAGDEINSRNFDTLVELIAPTKDDVVIDNGASSFVPLSHYLISNQVPALLQEMGHELVIHTVVTGGQALLDTVSGFAQLASQFPAEALFVVWLNPYWGPIEHEGKSFEQMKAYTANKARVSSIIQIPALKEETYGRDFSDMLQERLTFDQALADESLTIMTRQRLKIVRRGLFEQLDAAAVL.

It to plasmid R751 TraL.

The sequence is that of Protein TraL (traL) from Escherichia coli.